The chain runs to 402 residues: Multidrug resistance protein MdtH (402 aa).

Over 1-12 the chain is Cytoplasmic; it reads MSRVSQARNLGK. The helical transmembrane segment at 13 to 33 threads the bilayer; sequence YFLLIDNMLVVLVFFVVFPLI. Over 34–98 the chain is Periplasmic; sequence SIRFVDQMGW…GFATMGIAHE (65 aa). Residues 99-116 traverse the membrane as a helical segment; the sequence is PWLLWFSCFLSGLGGTLF. Over 117–138 the chain is Cytoplasmic; the sequence is DPPRSALVVKLIRPEQRGRFFS. Residues 139–159 form a helical membrane-spanning segment; that stretch reads LLMMQDSAGAVIGALLGSWLL. The Periplasmic portion of the chain corresponds to 160–164; that stretch reads QYDFR. The chain crosses the membrane as a helical span at residues 165-185; that stretch reads LVCATGAILFILCALFNAWLL. At 186 to 213 the chain is on the cytoplasmic side; it reads PAWKLSTVRTPVREGMRRVMSDKRFVTY. The helical transmembrane segment at 214 to 234 threads the bilayer; that stretch reads VLTLAGYYMLAVQVMLMLPIM. Over 235–243 the chain is Periplasmic; that stretch reads VNDIAGSPA. The helical transmembrane segment at 244–264 threads the bilayer; that stretch reads AVKWMYAIEACLSLTLLYPIA. Over 265–276 the chain is Cytoplasmic; it reads RWSEKRFRLEHR. Residues 277 to 297 form a helical membrane-spanning segment; sequence LMAGLLVMSLSMIPIGMVGNL. The Periplasmic segment spans residues 298 to 299; sequence QQ. A helical membrane pass occupies residues 300–320; the sequence is LFTLICAFYIGSVIAEPARET. Topologically, residues 321–339 are cytoplasmic; the sequence is LSASLADARARGSYMGFSR. A helical membrane pass occupies residues 340-360; the sequence is LGLAIGGAIGYIGGGWLFDMG. Topologically, residues 361-367 are periplasmic; the sequence is KALTQPE. Residues 368 to 388 form a helical membrane-spanning segment; it reads LPWMMLGIIGFITFLALGWQF. Residues 389–402 lie on the Cytoplasmic side of the membrane; it reads SHKRTPRRMLEPGA.

The protein belongs to the major facilitator superfamily. DHA1 family. MdtH (TC 2.A.1.2.21) subfamily.

It localises to the cell inner membrane. In Salmonella choleraesuis (strain SC-B67), this protein is Multidrug resistance protein MdtH.